A 61-amino-acid polypeptide reads, in one-letter code: Large ribosomal subunit protein bL32 (61 aa).

Positions 1–22 are enriched in basic residues; sequence MAVPKKKTSKSRRDMRRSHHAL. Positions 1-27 are disordered; that stretch reads MAVPKKKTSKSRRDMRRSHHALKPSAY.

The protein belongs to the bacterial ribosomal protein bL32 family.

This chain is Large ribosomal subunit protein bL32, found in Rhodospirillum rubrum (strain ATCC 11170 / ATH 1.1.1 / DSM 467 / LMG 4362 / NCIMB 8255 / S1).